Here is a 677-residue protein sequence, read N- to C-terminus: Transmembrane and coiled-coil domain-containing protein 3 (677 aa).

A signal peptide spans 1–22 (MKVLGRSFFWVLFPVLPWAVQA). Residues 124–204 (DYKDVVNMKE…EEEIEEHAFD (81 aa)) adopt a coiled-coil conformation. N-linked (GlcNAc...) asparagine glycosylation is found at N206 and N230. Transmembrane regions (helical) follow at residues 286–306 (WLCTAIGLPTMFGYIICGVLL), 317–337 (IVQVETLGEFGVFFTLFLVGL), 350–370 (ISLQGPCYMTLLMIAFGLLWG), 416–436 (VLLGMLVTQDVQLGLFMAVMP), 456–476 (ILVLIGQILFSLAAVFLLCLV), 498–518 (EILILGISAFIFLMLTVTELL), 554–574 (FLAIVFFASIGLHVFPTFVAY), 578–598 (VLVFLTLSVVVMKFLLAALVL), 608–628 (YIKWIVSAGLAQVSEFSFVLG), and 640–660 (EVYLLILSVTTLSLLLAPVLW).

This sequence belongs to the monovalent cation:proton antiporter 2 (CPA2) transporter (TC 2.A.37) family. Expressed in the cornea, lens capsule and choroid-retinal pigment epithelium (at protein level).

The protein localises to the membrane. Its function is as follows. Probable Na(+)/H(+) antiporter. The sequence is that of Transmembrane and coiled-coil domain-containing protein 3 (TMCO3) from Homo sapiens (Human).